Reading from the N-terminus, the 568-residue chain is Sphingosine-1-phosphate lyase 1 (568 aa).

At 1–41 (MPSTDLLTLKAFEPYLEILEVYSTKAKNYVNGHCTKYEPWQ) the chain is on the lumenal side. A helical; Signal-anchor for type III membrane protein transmembrane segment spans residues 42–62 (LIAWSVVWTLLIVWGYEFVFQ). At 63–568 (PESLWSRFKK…SQMNGSPKPH (506 aa)) the chain is on the cytoplasmic side. Lysine 353 carries the N6-(pyridoxal phosphate)lysine; alternate modification. Lysine 353 bears the N6-acetyllysine; alternate mark. Residues tyrosine 356 and tyrosine 366 each carry the 3'-nitrotyrosine modification. Serine 564 is subject to Phosphoserine.

The protein belongs to the group II decarboxylase family. Sphingosine-1-phosphate lyase subfamily. As to quaternary structure, homodimer. It depends on pyridoxal 5'-phosphate as a cofactor.

Its subcellular location is the endoplasmic reticulum membrane. The catalysed reaction is sphinganine 1-phosphate = hexadecanal + phosphoethanolamine. It catalyses the reaction sphing-4-enine 1-phosphate = (2E)-hexadecenal + phosphoethanolamine. Its pathway is lipid metabolism; sphingolipid metabolism. Functionally, cleaves phosphorylated sphingoid bases (PSBs), such as sphingosine-1-phosphate, into fatty aldehydes and phosphoethanolamine. Elevates stress-induced ceramide production and apoptosis. Required for global lipid homeostasis in liver and cholesterol homeostasis in fibroblasts. Involved in the regulation of pro-inflammatory response and neutrophil trafficking. Modulates neuronal autophagy via phosphoethanolamine production which regulates accumulation of aggregate-prone proteins such as APP. Seems to play a role in establishing neuronal contact sites and axonal maintenance. The protein is Sphingosine-1-phosphate lyase 1 of Pongo abelii (Sumatran orangutan).